The following is a 337-amino-acid chain: Tryptophan--tRNA ligase (337 aa).

ATP-binding positions include Gln-12–Ser-14 and Gly-21–Asn-22. Residues Pro-13–Asn-22 carry the 'HIGH' region motif. Asp-138 contacts L-tryptophan. ATP contacts are provided by residues Gly-150–Asp-152, Ile-189, and Lys-198–Ser-202. A 'KMSKS' region motif is present at residues Lys-198–Ser-202.

This sequence belongs to the class-I aminoacyl-tRNA synthetase family. In terms of assembly, homodimer.

It localises to the cytoplasm. The enzyme catalyses tRNA(Trp) + L-tryptophan + ATP = L-tryptophyl-tRNA(Trp) + AMP + diphosphate + H(+). Its function is as follows. Catalyzes the attachment of tryptophan to tRNA(Trp). This chain is Tryptophan--tRNA ligase, found in Leifsonia xyli subsp. xyli (strain CTCB07).